The sequence spans 173 residues: Monothiol glutaredoxin-S14, chloroplastic (173 aa).

The N-terminal 63 residues, 1 to 63 (MALRSVKTPT…KLKPTKFRCS (63 aa)), are a transit peptide targeting the chloroplast. The Glutaredoxin domain maps to 72–173 (KDTLEKLVNS…QEEVEKAMCS (102 aa)). Position 89 (K89) interacts with glutathione. 2 residues coordinate [2Fe-2S] cluster: C97 and F99. The residue at position 97 (C97) is an S-glutathionyl cysteine. The segment at 97–100 (CGFS) is required for CAX1 activation. Residues R126 and K130 each coordinate glutathione. Residues 133-137 (SNWPT) are required for CAX1 activation. Glutathione-binding positions include F138 and 151-152 (CD).

Belongs to the glutaredoxin family. CGFS subfamily. In terms of assembly, [2Fe-2S]-bridged holo-homodimer. Interacts with N-terminal part of CAX1 in yeast. Interacts in vitro with SUFE1, BOLA1, BOLA2 and BOLA4. Interacts in vivo only with SUFE1, BOLA1 and BOLA4. Interacts with SBP1. As to expression, highly expressed in leaves, at intermediate levels in stems and at lower levels in roots and flowers.

The protein resides in the plastid. It is found in the chloroplast. In terms of biological role, may only reduce GSH-thiol disulfides, but not protein disulfides (Potential). Probably involved in the regulation of the redox state of the BOLA proteins (Potential). May act as Fe-S cluster donors to Fe-S cluster-requiring proteins. May protect cells against protein oxidative damage. May regulate CAX cation transporters. The GRXS14-BOLA1 heterodimer binds a labile, oxygen sensitive Fe-S cluster. This chain is Monothiol glutaredoxin-S14, chloroplastic, found in Arabidopsis thaliana (Mouse-ear cress).